Consider the following 124-residue polypeptide: Competence protein ComGG (124 aa).

The first 28 residues, 1-28 (MYRTRGFIYPAVLFVSALVLLIVNFVAA), serve as a signal peptide directing secretion.

The transformation pili are flexible filaments, consisting mainly of the major pilin ComGC and smaller amounts of the minor pilins, including at least ComGD, ComGF and ComGG. Interacts with ComGC; the interaction is probably direct. Interacts with ComGD. Interacts with ComGF. May act as a link between ComGC, ComGD and ComGF. Homodimer; disulfide-linked. A minor fraction of ComGG is found as a disulfide-bonded homodimer. Partial processing of ComGG in competent cells requires ComC.

It localises to the cell membrane. It is found in the secreted. In terms of biological role, required for formation of the type IV-like pilus (T4P) that plays a role in transformation. Transformation pili are dynamically extended and retracted, perhaps thereby promoting DNA uptake and transformation. Required for transformation and DNA binding. In Bacillus subtilis (strain 168), this protein is Competence protein ComGG (comGG).